The chain runs to 586 residues: MKQSVSAEQIELKSSLPGSKKVYVDGTREGMKVPMREIEQSDTNGVQNPPIRVYDTSGPYTDPEYKVELEKGLQAPRHSWTLGRGDVEAYEGREIKPEDDGVKVASKHTPVFPQMDRKPLRAKQGANVSQMHYARNGIITSEMEYVAIREGVEPEFVRKEIAEGRAILPANINHPEAEPMIIGRNFHVKVNANIGNSAVSSSIAEEVEKMTWATRWGADTIMDLSTGKNIHTTREWIIRNAPVPVGTVPIYQALEKVNGIAEDLTWEVYRDTLIEQAEQGVDYFTIHAGVLLRYIPITAKRMTGIVSRGGSIMAQWCLFHHKENFLYTHFEEICEIMKQYDVSFSLGDGLRPGSIADANDEAQFSELETLGELTKIAWKHDVQVMIEGPGHVPMHLIKENMEKELDICQGAPFYTLGPLTTDIAPGYDHITSAIGAAMIGWFGTAMLCYVTPKEHLGLPNKDDVREGVITYKIAAHAADLAKGHKTAHQRDDALSKARFEFRWRDQFNLSLDPERAMEYHDETLPAEGAKTAHFCSMCGPKFCSMRISHDIREYAKENDLETTEAIEKGMKEKAVEFKETGSHLYQ.

Positions 1 to 58 (MKQSVSAEQIELKSSLPGSKKVYVDGTREGMKVPMREIEQSDTNGVQNPPIRVYDTSG) are disordered. Residues 22 to 39 (VYVDGTREGMKVPMREIE) are compositionally biased toward basic and acidic residues. Residues Asn-193, Met-222, Tyr-251, His-287, 307–309 (SRG), 348–351 (DGLR), and Glu-387 contribute to the substrate site. His-391 is a Zn(2+) binding site. Residue Tyr-414 participates in substrate binding. His-455 contributes to the Zn(2+) binding site. 3 residues coordinate [4Fe-4S] cluster: Cys-535, Cys-538, and Cys-543.

Belongs to the ThiC family. Requires [4Fe-4S] cluster as cofactor.

The catalysed reaction is 5-amino-1-(5-phospho-beta-D-ribosyl)imidazole + S-adenosyl-L-methionine = 4-amino-2-methyl-5-(phosphooxymethyl)pyrimidine + CO + 5'-deoxyadenosine + formate + L-methionine + 3 H(+). Its pathway is cofactor biosynthesis; thiamine diphosphate biosynthesis. Functionally, catalyzes the synthesis of the hydroxymethylpyrimidine phosphate (HMP-P) moiety of thiamine from aminoimidazole ribotide (AIR) in a radical S-adenosyl-L-methionine (SAM)-dependent reaction. This chain is Phosphomethylpyrimidine synthase, found in Bacillus mycoides (strain KBAB4) (Bacillus weihenstephanensis).